The chain runs to 493 residues: UDP-N-acetylmuramoyl-L-alanyl-D-glutamate--L-lysine ligase (493 aa).

Position 30 (Ser-30) interacts with UDP-N-acetyl-alpha-D-muramoyl-L-alanyl-D-glutamate. 110–116 is a binding site for ATP; sequence GTNGKTS. UDP-N-acetyl-alpha-D-muramoyl-L-alanyl-D-glutamate contacts are provided by residues Asn-151, 152–153, Ser-179, and Arg-187; that span reads TT. Lys-219 carries the post-translational modification N6-carboxylysine. The L-lysine recognition motif signature appears at 406–409; sequence DNPA.

This sequence belongs to the MurCDEF family. MurE subfamily. The cofactor is Mg(2+). Post-translationally, carboxylation is probably crucial for Mg(2+) binding and, consequently, for the gamma-phosphate positioning of ATP.

It localises to the cytoplasm. It catalyses the reaction UDP-N-acetyl-alpha-D-muramoyl-L-alanyl-D-glutamate + L-lysine + ATP = UDP-N-acetyl-alpha-D-muramoyl-L-alanyl-gamma-D-glutamyl-L-lysine + ADP + phosphate + H(+). It participates in cell wall biogenesis; peptidoglycan biosynthesis. Catalyzes the addition of L-lysine to the nucleotide precursor UDP-N-acetylmuramoyl-L-alanyl-D-glutamate (UMAG) in the biosynthesis of bacterial cell-wall peptidoglycan. Cannot use diaminopimelate as substrate. Can accept L-ornithine as substrate, but the efficiency is 400-fold lower than that with L-lysine. Seems to have a role in beta-lactam antibiotic resistance. The sequence is that of UDP-N-acetylmuramoyl-L-alanyl-D-glutamate--L-lysine ligase from Staphylococcus aureus (strain NCTC 8325 / PS 47).